The chain runs to 181 residues: UPF0397 protein SSU98_0390 (181 aa).

The next 5 membrane-spanning stretches (helical) occupy residues valine 9 to proline 29, leucine 46 to leucine 66, leucine 70 to glycine 90, isoleucine 108 to proline 128, and leucine 147 to valine 167.

This sequence belongs to the UPF0397 family.

It is found in the cell membrane. This is UPF0397 protein SSU98_0390 from Streptococcus suis (strain 98HAH33).